The sequence spans 135 residues: NADPH-dependent 7-cyano-7-deazaguanine reductase (135 aa).

Cys48 acts as the Thioimide intermediate in catalysis. The active-site Proton donor is Asp55. Substrate-binding positions include 70–72 and 89–90; these read IEL and HE.

It belongs to the GTP cyclohydrolase I family. QueF type 1 subfamily.

Its subcellular location is the cytoplasm. The catalysed reaction is 7-aminomethyl-7-carbaguanine + 2 NADP(+) = 7-cyano-7-deazaguanine + 2 NADPH + 3 H(+). It functions in the pathway tRNA modification; tRNA-queuosine biosynthesis. In terms of biological role, catalyzes the NADPH-dependent reduction of 7-cyano-7-deazaguanine (preQ0) to 7-aminomethyl-7-deazaguanine (preQ1). The polypeptide is NADPH-dependent 7-cyano-7-deazaguanine reductase (Prochlorococcus marinus (strain MIT 9313)).